A 56-amino-acid polypeptide reads, in one-letter code: Large ribosomal subunit protein bL33 (56 aa).

The protein belongs to the bacterial ribosomal protein bL33 family.

This is Large ribosomal subunit protein bL33 from Actinobacillus succinogenes (strain ATCC 55618 / DSM 22257 / CCUG 43843 / 130Z).